The sequence spans 75 residues: Dermaseptin-related peptide (75 aa).

An N-terminal signal peptide occupies residues 1-22; it reads MAFLNKSLLLVLFLGLVSLSIC. A propeptide spanning residues 23 to 43 is cleaved from the precursor; that stretch reads EEERRENEDEEEQEDDEQSEM. The tract at residues 24–44 is disordered; it reads EERRENEDEEEQEDDEQSEMR. The segment covering 30–40 has biased composition (acidic residues); that stretch reads EDEEEQEDDEQ. A Glutamine amide modification is found at Q72. Positions 74-75 are excised as a propeptide; the sequence is EQ.

As to expression, expressed by the skin glands.

The protein resides in the secreted. In terms of biological role, has antibacterial activity against Gram-positive bacterium M.luteus NCT C2665 but not against Gram-negative bacterium E.coli K12D31. The protein is Dermaseptin-related peptide of Agalychnis callidryas (Red-eyed tree frog).